We begin with the raw amino-acid sequence, 263 residues long: Small ribosomal subunit protein eS4 (263 aa).

The S4 RNA-binding domain maps to 42–104; the sequence is LPLIIFLRNR…TGENFRLIYD (63 aa).

It belongs to the eukaryotic ribosomal protein eS4 family.

In Bos taurus (Bovine), this protein is Small ribosomal subunit protein eS4 (RPS4).